The following is a 1054-amino-acid chain: Cell wall acid trehalase ARB_03719 (1054 aa).

The signal sequence occupies residues 1–24 (MKQPNINLAACILWLLSIITAVAA). Asn-138, Asn-178, Asn-183, Asn-207, Asn-239, Asn-277, and Asn-309 each carry an N-linked (GlcNAc...) asparagine glycan. 450-451 (WD) is a binding site for substrate. 4 N-linked (GlcNAc...) asparagine glycosylation sites follow: Asn-495, Asn-515, Asn-572, and Asn-580. The active-site Proton donor is the Glu-586. Asn-620 and Asn-648 each carry an N-linked (GlcNAc...) asparagine glycan. Position 654 to 655 (654 to 655 (KQ)) interacts with substrate. Asn-808 and Asn-844 each carry an N-linked (GlcNAc...) asparagine glycan. Residues 950-974 (PLHPVTDPENGDASGSSPTTPASSV) are disordered. The segment covering 962 to 974 (ASGSSPTTPASSV) has biased composition (low complexity). Residues Asn-1004, Asn-1007, and Asn-1039 are each glycosylated (N-linked (GlcNAc...) asparagine).

This sequence belongs to the glycosyl hydrolase 65 family.

Its subcellular location is the secreted. It is found in the cell wall. The catalysed reaction is alpha,alpha-trehalose + H2O = alpha-D-glucose + beta-D-glucose. Its function is as follows. Cell wall acid trehalase that catalyzes hydrolysis of the disaccharide trehalose and required for growth on trehalose as carbon source. Plays a role in virulence. The polypeptide is Cell wall acid trehalase ARB_03719 (Arthroderma benhamiae (strain ATCC MYA-4681 / CBS 112371) (Trichophyton mentagrophytes)).